Consider the following 350-residue polypeptide: tRNA uridine(34) hydroxylase (350 aa).

The 95-residue stretch at 146-240 folds into the Rhodanese domain; sequence DDPDAVFIDM…YARKAREQGL (95 aa). The active-site Cysteine persulfide intermediate is Cys200. Positions 314–350 are disordered; the sequence is PEEEQRRRRAGRENGNKIFNKSRGRLNTQLGIPDPAE. The segment covering 316-328 has biased composition (basic and acidic residues); it reads EEQRRRRAGRENG.

The protein belongs to the TrhO family.

The catalysed reaction is uridine(34) in tRNA + AH2 + O2 = 5-hydroxyuridine(34) in tRNA + A + H2O. Its function is as follows. Catalyzes oxygen-dependent 5-hydroxyuridine (ho5U) modification at position 34 in tRNAs. This chain is tRNA uridine(34) hydroxylase, found in Citrobacter koseri (strain ATCC BAA-895 / CDC 4225-83 / SGSC4696).